The following is a 183-amino-acid chain: uncharacterized protein (183 aa).

Residue lysine 21 forms a Glycyl lysine isopeptide (Lys-Gly) (interchain with G-Cter in ubiquitin) linkage. Disordered stretches follow at residues asparagine 24–asparagine 111 and proline 160–proline 183. Positions glutamine 99–glutamine 108 are enriched in low complexity. Residues leucine 170–proline 183 show a composition bias toward polar residues.

The protein localises to the cytoplasm. This is an uncharacterized protein from Saccharomyces cerevisiae (strain ATCC 204508 / S288c) (Baker's yeast).